The chain runs to 194 residues: ATP-dependent Clp protease proteolytic subunit 3 (194 aa).

Residue Ser96 is the Nucleophile of the active site. The active site involves His121.

This sequence belongs to the peptidase S14 family. In terms of assembly, fourteen ClpP subunits assemble into 2 heptameric rings which stack back to back to give a disk-like structure with a central cavity, resembling the structure of eukaryotic proteasomes.

The protein localises to the cytoplasm. The enzyme catalyses Hydrolysis of proteins to small peptides in the presence of ATP and magnesium. alpha-casein is the usual test substrate. In the absence of ATP, only oligopeptides shorter than five residues are hydrolyzed (such as succinyl-Leu-Tyr-|-NHMec, and Leu-Tyr-Leu-|-Tyr-Trp, in which cleavage of the -Tyr-|-Leu- and -Tyr-|-Trp bonds also occurs).. Cleaves peptides in various proteins in a process that requires ATP hydrolysis. Has a chymotrypsin-like activity. Plays a major role in the degradation of misfolded proteins. The sequence is that of ATP-dependent Clp protease proteolytic subunit 3 from Rhizobium etli (strain ATCC 51251 / DSM 11541 / JCM 21823 / NBRC 15573 / CFN 42).